The chain runs to 479 residues: Wax ester synthase/diacylglycerol acyltransferase 2 (479 aa).

The Cytoplasmic portion of the chain corresponds to 1-182 (MAIERQVTEA…VAPKKNKAKN (182 aa)). Histidine 144 serves as the catalytic Proton acceptor. Residues 183–199 (VCFSLVAWLWFIVRLMF) traverse the membrane as a helical segment. Residues 200–479 (HTCVEVIKSI…PKKVFHASKV (280 aa)) lie on the Lumenal side of the membrane. The N-linked (GlcNAc...) asparagine glycan is linked to asparagine 253.

It in the N-terminal section; belongs to the long-chain O-acyltransferase family. Mostly expressed in flowers and siliques and barely in roots and stems.

The protein resides in the cell membrane. It localises to the endoplasmic reticulum membrane. The catalysed reaction is an acyl-CoA + a 1,2-diacyl-sn-glycerol = a triacyl-sn-glycerol + CoA. It carries out the reaction a long chain fatty alcohol + a fatty acyl-CoA = a wax ester + CoA. It participates in glycerolipid metabolism; triacylglycerol biosynthesis. It functions in the pathway lipid metabolism. In terms of biological role, bifunctional wax ester synthase/diacylglycerol acyltransferase. Involved in cuticular wax biosynthesis. The chain is Wax ester synthase/diacylglycerol acyltransferase 2 from Arabidopsis thaliana (Mouse-ear cress).